A 204-amino-acid polypeptide reads, in one-letter code: Allatotropin (204 aa).

The first 20 residues, 1-20, serve as a signal peptide directing secretion; sequence MNLTMQLAVIVAVCLCLAEG. Positions 21-35 are excised as a propeptide; that stretch reads APDVRLTRTKQQRPT. Positions 47–83 are disordered; sequence RGFGKRDRPHPRAERDVDHQAPSARPNRGTPTFKSPT. Position 49 is a phenylalanine amide (Phe49). Over residues 50–65 the composition is skewed to basic and acidic residues; the sequence is GKRDRPHPRAERDVDH. A propeptide spanning residues 53–204 is cleaved from the precursor; sequence DRPHPRAERD…LSSEELLRNF (152 aa).

In terms of tissue distribution, expressed extensively in the brain, frontal ganglion and terminal ganglion of the day 2 fifth instar larva (at protein level). Not expressed in the larval brain after day 4 of the fifth instar, or in the brain of the pupa or adult. Expression in the terminal ganglion is localized to cells in the posterior portion of the seventh neuromere of day 2 fifth instar larvae. In the pupa and adult expression is detected in the medial region of neuromere 6, the dorsal medial region of neuromere 7, and the posterior neuromere of the terminal ganglion (at protein level). In the frontal ganglion expression decreases in the wandering larvae and is present at low levels in during pupal ecdysis, but is not detected in the adult. Expressed in the subesophageal ganglion of day 2 fifth instar larva, but not at any time before or after day 2. Not expressed in the abdominal ganglia 1-6 of the day 2 fifth instar larva (at protein level). Expressed in the anterior neuromeres of the pterothoracic ganglion in pupa but not in adult (at protein level). Expressed in the unfused abdominal ganglia of day 10 pupae, and in pharate adult is expressed in median neurosecretory cells M1, M2 and M5, but not in median neurosecretory cells M3 and M4 (at protein level). Not expressed in the differentiated median neurosecretory cells M5 of the larva (at protein level). In the pharate adult brain isoform 3 is the predominant form, with lower levels of isoform 2 and very low levels of isoform 1 detected. In the pharate adult nerve cord isoform 3 is the predominant form, with lower levels of isoform 2 and no isoform 1 detected. In the pharate adult frontal ganglion isoform 3 is expressed, but not isoform 1 and isoform 2.

It localises to the secreted. Functionally, neuropeptide stimulator of juvenile hormone synthesis. Cardioregulatory neurohormone that increases heart beat rate in the adult but not in the larva. Inhibits active ion transport in the midgut of feeding fourth instar and day 2 fifth instar larva, but not in the midgut of pharate or wandering fifth instar larva. This is Allatotropin from Manduca sexta (Tobacco hawkmoth).